We begin with the raw amino-acid sequence, 266 residues long: Protein SCO2 homolog, mitochondrial (266 aa).

A mitochondrion-targeting transit peptide spans 1–41; sequence MLLLARPPKAWHRLFQLQPLALLGTPGGKTQHVRYQLFSTP. Over 42–60 the chain is Mitochondrial matrix; the sequence is GPADTGRQGQPQGPGLRTR. Residues 61 to 78 form a helical membrane-spanning segment; sequence LLVTALVGAGLGGAWLAL. The Mitochondrial intermembrane segment spans residues 79–266; that stretch reads RAEKERGRQQ…HMAAFRSVLR (188 aa). Positions 85 to 259 constitute a Thioredoxin domain; it reads GRQQQRTEAL…ITDSVRRHMA (175 aa). Cu cation is bound by residues Cys-133, Cys-137, and His-224. A disulfide bridge connects residues Cys-133 and Cys-137.

It belongs to the SCO1/2 family. Homodimer. Interacts with COA6. Found in a complex with TMEM177, COX20, COA6, MT-CO2/COX2, COX18 and SCO1. Interacts with TMEM177 in a COX20-dependent manner. Interacts with COX20 in a MT-CO2/COX2- and COX18-dependent manner. Interacts with COX16.

The protein resides in the mitochondrion inner membrane. Its function is as follows. Copper metallochaperone essential for the synthesis and maturation of cytochrome c oxidase subunit II (MT-CO2/COX2) by facilitating the incorporation of copper into the Cu(A) site of MT-CO2/COX2. Could also act as a thiol-disulfide oxidoreductase to regulate the redox state of the cysteines in SCO1 during maturation of MT-CO2/COX2. In Bos taurus (Bovine), this protein is Protein SCO2 homolog, mitochondrial (SCO2).